The sequence spans 262 residues: Acyl-[acyl-carrier-protein]--UDP-N-acetylglucosamine O-acyltransferase (262 aa).

Belongs to the transferase hexapeptide repeat family. LpxA subfamily. As to quaternary structure, homotrimer.

Its subcellular location is the cytoplasm. The enzyme catalyses a (3R)-hydroxyacyl-[ACP] + UDP-N-acetyl-alpha-D-glucosamine = a UDP-3-O-[(3R)-3-hydroxyacyl]-N-acetyl-alpha-D-glucosamine + holo-[ACP]. It functions in the pathway glycolipid biosynthesis; lipid IV(A) biosynthesis; lipid IV(A) from (3R)-3-hydroxytetradecanoyl-[acyl-carrier-protein] and UDP-N-acetyl-alpha-D-glucosamine: step 1/6. In terms of biological role, involved in the biosynthesis of lipid A, a phosphorylated glycolipid that anchors the lipopolysaccharide to the outer membrane of the cell. The chain is Acyl-[acyl-carrier-protein]--UDP-N-acetylglucosamine O-acyltransferase from Yersinia enterocolitica.